We begin with the raw amino-acid sequence, 355 residues long: 3-dehydroquinate synthase (355 aa).

Residues 67 to 72, 101 to 105, 125 to 126, Lys-138, Lys-147, and 165 to 168 contribute to the NAD(+) site; these read DGEIYK, GVIGD, TT, and FLNT. Zn(2+)-binding residues include Glu-180, His-243, and His-260.

The protein belongs to the sugar phosphate cyclases superfamily. Dehydroquinate synthase family. NAD(+) is required as a cofactor. It depends on Co(2+) as a cofactor. Requires Zn(2+) as cofactor.

The protein localises to the cytoplasm. The enzyme catalyses 7-phospho-2-dehydro-3-deoxy-D-arabino-heptonate = 3-dehydroquinate + phosphate. Its pathway is metabolic intermediate biosynthesis; chorismate biosynthesis; chorismate from D-erythrose 4-phosphate and phosphoenolpyruvate: step 2/7. Functionally, catalyzes the conversion of 3-deoxy-D-arabino-heptulosonate 7-phosphate (DAHP) to dehydroquinate (DHQ). The polypeptide is 3-dehydroquinate synthase (Buchnera aphidicola subsp. Baizongia pistaciae (strain Bp)).